The primary structure comprises 153 residues: UPF0260 protein YcgN (153 aa).

This sequence belongs to the UPF0260 family.

This Shigella boydii serotype 18 (strain CDC 3083-94 / BS512) protein is UPF0260 protein YcgN.